The primary structure comprises 47 residues: Type II secretion system protein N (47 aa).

This sequence belongs to the GSP N family.

Its subcellular location is the cell inner membrane. Involved in a type II secretion system (T2SS, formerly general secretion pathway, GSP) for the export of proteins. The protein is Type II secretion system protein N (exeN) of Aeromonas salmonicida.